The following is a 217-amino-acid chain: 2-phospho-L-lactate guanylyltransferase (217 aa).

The protein belongs to the CofC family. Homodimer.

The enzyme catalyses (2S)-2-phospholactate + GTP + H(+) = (2S)-lactyl-2-diphospho-5'-guanosine + diphosphate. It functions in the pathway cofactor biosynthesis; coenzyme F420 biosynthesis. Functionally, guanylyltransferase that catalyzes the activation of (2S)-2-phospholactate (2-PL) as (2S)-lactyl-2-diphospho-5'-guanosine, via the condensation of 2-PL with GTP. It is involved in the biosynthesis of coenzyme F420, a hydride carrier cofactor. The protein is 2-phospho-L-lactate guanylyltransferase of Halorubrum lacusprofundi (strain ATCC 49239 / DSM 5036 / JCM 8891 / ACAM 34).